Here is a 57-residue protein sequence, read N- to C-terminus: Metallothionein-2 (57 aa).

Residues 1–28 (PDPCCNDKCDCKEGECKTGCKCTSCRCP) are beta. A divalent metal cation is bound by residues Cys4, Cys5, Cys9, Cys11, Cys16, Cys20, Cys22, Cys25, Cys27, Cys30, Cys33, Cys37, Cys39, Cys45, Cys49, Cys53, Cys55, and Cys56. Positions 29-57 (PCEQCSSGCKCANKEDCRKTCSKPCSCCP) are alpha.

Belongs to the metallothionein superfamily. Type 3 family.

Its function is as follows. Metallothioneins have a high content of cysteine residues that bind various heavy metals. Class I MTS in marine crustacea are involved in the sequestration of elevated levels of heavy-metal ions. In Scylla serrata (Mud crab), this protein is Metallothionein-2.